Consider the following 497-residue polypeptide: Membrane-bound lytic murein transglycosylase F (497 aa).

The first 29 residues, 1-29 (MFFRPDFRPRCAKWLIATGLFLMLGACVE), serve as a signal peptide directing secretion. A non-LT domain region spans residues 30 to 267 (KPTTLERVKE…RLKDRYYGHV (238 aa)). Residues 268–497 (DVLGYVGAYT…PASSPEKPAL (230 aa)) form an LT domain region. Glu-314 is a catalytic residue. The interval 464 to 497 (VADGNLHVPGVDKTQPPAPTAPVVPASSPEKPAL) is disordered. Residues 486-497 (VVPASSPEKPAL) show a composition bias toward low complexity.

This sequence in the N-terminal section; belongs to the bacterial solute-binding protein 3 family. In the C-terminal section; belongs to the transglycosylase Slt family.

It is found in the cell outer membrane. The enzyme catalyses Exolytic cleavage of the (1-&gt;4)-beta-glycosidic linkage between N-acetylmuramic acid (MurNAc) and N-acetylglucosamine (GlcNAc) residues in peptidoglycan, from either the reducing or the non-reducing ends of the peptidoglycan chains, with concomitant formation of a 1,6-anhydrobond in the MurNAc residue.. Murein-degrading enzyme that degrades murein glycan strands and insoluble, high-molecular weight murein sacculi, with the concomitant formation of a 1,6-anhydromuramoyl product. Lytic transglycosylases (LTs) play an integral role in the metabolism of the peptidoglycan (PG) sacculus. Their lytic action creates space within the PG sacculus to allow for its expansion as well as for the insertion of various structures such as secretion systems and flagella. This is Membrane-bound lytic murein transglycosylase F from Pseudomonas syringae pv. tomato (strain ATCC BAA-871 / DC3000).